Consider the following 207-residue polypeptide: Large ribosomal subunit protein uL3 (207 aa).

The protein belongs to the universal ribosomal protein uL3 family. In terms of assembly, part of the 50S ribosomal subunit. Forms a cluster with proteins L14 and L19.

Its function is as follows. One of the primary rRNA binding proteins, it binds directly near the 3'-end of the 23S rRNA, where it nucleates assembly of the 50S subunit. The protein is Large ribosomal subunit protein uL3 of Fervidobacterium nodosum (strain ATCC 35602 / DSM 5306 / Rt17-B1).